The following is an 819-amino-acid chain: Advillin (819 aa).

Residues 1 to 731 are core; that stretch reads MSLSSAFRAV…YEQLKNELGD (731 aa). Residues 24 to 73 form a Gelsolin-like 1 repeat; sequence MELALVPLSAHGNFYEGDCYIVLSTRRVGSLLSQNIHFWIGKDSSQDEQS. At Tyr-85 the chain carries Phosphotyrosine. A 1,2-diacyl-sn-glycero-3-phospho-(1D-myo-inositol-4,5-bisphosphate)-binding positions include 109–116 and 135–143; these read KQGIIYKK and RLLHVKGKR. Gelsolin-like repeat units lie at residues 145 to 185, 262 to 306, 403 to 454, 525 to 565, and 628 to 669; these read IQAT…GERL, LSVT…VEKQ, ENLE…DELA, TKAV…DERA, and FLVT…TEKK. Positions 628 to 819 are required for interaction with F-actin; sequence FLVTEVTDFT…LQLKKERGLF (192 aa). Residues 732–819 are headpiece; the sequence is ATAIVRITAD…LQLKKERGLF (88 aa). Tyr-748 and Tyr-758 each carry phosphotyrosine. The HP domain occupies 753–819; it reads DGEPKYYPVE…LQLKKERGLF (67 aa).

The protein belongs to the villin/gelsolin family. As to quaternary structure, associates (via C-terminus) with actin. Interacts with F-actin. Interacts with SCARF1; the interaction occurs in embryonic dorsal root ganglions at 18 dpc and induces neurite-like outgrowth. Interacts with PLCE1. Interacts with ACTR2 and ACTR3; associates with the ARP2/3 complex. In terms of tissue distribution, most highly expressed in the endometrium of the uterus, the intestinal villi and the testes. Weaker expression also detected in the brain, dorsal root ganglions and on the surface of the tongue.

Its subcellular location is the cytoplasm. It localises to the cytoskeleton. The protein localises to the cell projection. The protein resides in the lamellipodium. It is found in the cell junction. Its subcellular location is the focal adhesion. It localises to the neuron projection. The protein localises to the axon. Functionally, ca(2+)-regulated actin-binding protein which plays an important role in actin bundling. May have a unique function in the morphogenesis of neuronal cells which form ganglia. Required for SREC1-mediated regulation of neurite-like outgrowth. Plays a role in regenerative sensory axon outgrowth and remodeling processes after peripheral injury in neonates. Involved in the formation of long fine actin-containing filopodia-like structures in fibroblast. Plays a role in ciliogenesis. In podocytes, controls lamellipodia formation through the regulation of EGF-induced diacylglycerol generation by PLCE1 and ARP2/3 complex assembly. The chain is Advillin from Mus musculus (Mouse).